Reading from the N-terminus, the 451-residue chain is Ribosomal protein uS12 methylthiotransferase RimO (451 aa).

An MTTase N-terminal domain is found at 17–127 (PTIGFVSLGC…VLAQVHEHLP (111 aa)). [4Fe-4S] cluster-binding residues include cysteine 26, cysteine 62, cysteine 91, cysteine 160, cysteine 164, and cysteine 167. The Radical SAM core domain maps to 146–383 (LTPRHYAYLK…MQLQQRISTE (238 aa)). A TRAM domain is found at 386–451 (KQKVGQTLPV…DEYDLWGTRV (66 aa)).

Belongs to the methylthiotransferase family. RimO subfamily. Requires [4Fe-4S] cluster as cofactor.

It localises to the cytoplasm. The enzyme catalyses L-aspartate(89)-[ribosomal protein uS12]-hydrogen + (sulfur carrier)-SH + AH2 + 2 S-adenosyl-L-methionine = 3-methylsulfanyl-L-aspartate(89)-[ribosomal protein uS12]-hydrogen + (sulfur carrier)-H + 5'-deoxyadenosine + L-methionine + A + S-adenosyl-L-homocysteine + 2 H(+). Its function is as follows. Catalyzes the methylthiolation of an aspartic acid residue of ribosomal protein uS12. This Cellvibrio japonicus (strain Ueda107) (Pseudomonas fluorescens subsp. cellulosa) protein is Ribosomal protein uS12 methylthiotransferase RimO.